Here is a 513-residue protein sequence, read N- to C-terminus: Putative thymidine phosphorylase (513 aa).

Belongs to the thymidine/pyrimidine-nucleoside phosphorylase family. Type 2 subfamily.

It catalyses the reaction thymidine + phosphate = 2-deoxy-alpha-D-ribose 1-phosphate + thymine. This is Putative thymidine phosphorylase from Bradyrhizobium diazoefficiens (strain JCM 10833 / BCRC 13528 / IAM 13628 / NBRC 14792 / USDA 110).